The sequence spans 199 residues: Recombination protein RecR (199 aa).

Residues 57–72 (CQSCRTYTEESLCPIC) form a C4-type zinc finger. Residues 81-176 (STICVVETPA…VISRIAHGVP (96 aa)) form the Toprim domain.

It belongs to the RecR family.

Its function is as follows. May play a role in DNA repair. It seems to be involved in an RecBC-independent recombinational process of DNA repair. It may act with RecF and RecO. The protein is Recombination protein RecR of Shewanella sp. (strain MR-4).